The chain runs to 196 residues: Golgi to ER traffic protein 1 (196 aa).

Residues 1 to 10 (MFLDLHPYTI) lie on the Lumenal side of the membrane. A helical transmembrane segment spans residues 11 to 30 (LVSIFIILLVKQIVGRIGKS). Topologically, residues 31–114 (TIQEFVWLLY…SIDKLANVLL (84 aa)) are cytoplasmic. Residues 76–114 (AKWTKLNRQADKLTSEIQKLNEEIRQSKASIDKLANVLL) adopt a coiled-coil conformation. Residues 115-135 (MVLTTLPIWVARIFFRKTHLF) traverse the membrane as a helical segment. The Lumenal segment spans residues 136–159 (YLRSGIFPRYIEWVLALPFFPSGA). A helical transmembrane segment spans residues 160 to 176 (VGLTVWMFAANSVIHNV). The Cytoplasmic segment spans residues 177-196 (ISLVSFAFEKRVEKPVRQKK).

Belongs to the WRB/GET1 family. Component of the Golgi to ER traffic (GET) complex, which is composed of GET1, GET2 and GET3. Within the complex, GET1 and GET2 form a heterotetramer which is stabilized by phosphatidylinositol binding and which binds to the GET3 homodimer.

The protein localises to the endoplasmic reticulum membrane. It is found in the golgi apparatus membrane. In terms of biological role, required for the post-translational delivery of tail-anchored (TA) proteins to the endoplasmic reticulum. Together with GET2, acts as a membrane receptor for soluble GET3, which recognizes and selectively binds the transmembrane domain of TA proteins in the cytosol. The GET complex cooperates with the HDEL receptor ERD2 to mediate the ATP-dependent retrieval of resident ER proteins that contain a C-terminal H-D-E-L retention signal from the Golgi to the ER. This Candida tropicalis (strain ATCC MYA-3404 / T1) (Yeast) protein is Golgi to ER traffic protein 1.